The following is a 352-amino-acid chain: MYLQGTKQTFLENMNGTENLTTSLINNTCHDTIDEFRNQVYSTMYSVISVVGFFGNSFVLYVLIKTYHEKSAFQVYMINLAIADLLCVCTLPLRVVYYVHKGKWLFGDFLCRLTTYALYVNLYCSIFFMTAMSFFRCVAIVFPVQNINLVTQKKARFVCIGIWIFVILTSSPFLMYKSYQDEKNNTKCFEPPQNNQAKKYVLILHYVSLFFGFIIPFVTIIVCYTMIILTLLKNTMKKNMPSRRKAIGMIIVVTAAFLVSFMPYHIQRTIHLHLLHSETRPCDSVLRMQKSVVITLSLAASNCCFDPLLYFFSGGNFRRRLSTFRKHSLSSMTYVPKKKASLPEKGEEICNE.

Topologically, residues 1–43 (MYLQGTKQTFLENMNGTENLTTSLINNTCHDTIDEFRNQVYST) are extracellular. N-linked (GlcNAc...) asparagine glycans are attached at residues Asn15, Asn19, and Asn26. Residues 44 to 64 (MYSVISVVGFFGNSFVLYVLI) traverse the membrane as a helical segment. The Cytoplasmic portion of the chain corresponds to 65–72 (KTYHEKSA). A helical transmembrane segment spans residues 73–93 (FQVYMINLAIADLLCVCTLPL). The Extracellular segment spans residues 94–121 (RVVYYVHKGKWLFGDFLCRLTTYALYVN). Cys111 and Cys188 are oxidised to a cystine. A helical membrane pass occupies residues 122-142 (LYCSIFFMTAMSFFRCVAIVF). The Cytoplasmic segment spans residues 143 to 156 (PVQNINLVTQKKAR). A helical membrane pass occupies residues 157 to 177 (FVCIGIWIFVILTSSPFLMYK). The Extracellular portion of the chain corresponds to 178–208 (SYQDEKNNTKCFEPPQNNQAKKYVLILHYVS). A glycan (N-linked (GlcNAc...) asparagine) is linked at Asn184. The chain crosses the membrane as a helical span at residues 209-229 (LFFGFIIPFVTIIVCYTMIIL). The Cytoplasmic segment spans residues 230-245 (TLLKNTMKKNMPSRRK). A helical membrane pass occupies residues 246-266 (AIGMIIVVTAAFLVSFMPYHI). Residues 267–291 (QRTIHLHLLHSETRPCDSVLRMQKS) are Extracellular-facing. Residues 292–312 (VVITLSLAASNCCFDPLLYFF) traverse the membrane as a helical segment. The Cytoplasmic segment spans residues 313–352 (SGGNFRRRLSTFRKHSLSSMTYVPKKKASLPEKGEEICNE).

Belongs to the G-protein coupled receptor 1 family. In terms of tissue distribution, widely expressed, with higher expression in the lung and skin, intermediate levels in the heart, kidney and stomach and lower levels in several other tissues. Isoform 1 is the most abundant form in all tested tissues.

The protein resides in the cell membrane. Its function is as follows. Receptor for cysteinyl leukotrienes mediating constriction of the microvascular smooth muscle during an inflammatory response. This response is mediated via a G-protein that activates a phosphatidylinositol-calcium second messenger system. The rank order of affinities for the leukotrienes is LTD4 &gt;&gt; LTE4 = LTC4 &gt;&gt; LTB4. This is Cysteinyl leukotriene receptor 1 (Cysltr1) from Mus musculus (Mouse).